The chain runs to 233 residues: Cytidylate kinase (233 aa).

15-23 (GPSGAGKSS) lines the ATP pocket.

It belongs to the cytidylate kinase family. Type 1 subfamily.

It is found in the cytoplasm. It catalyses the reaction CMP + ATP = CDP + ADP. The enzyme catalyses dCMP + ATP = dCDP + ADP. In Citrifermentans bemidjiense (strain ATCC BAA-1014 / DSM 16622 / JCM 12645 / Bem) (Geobacter bemidjiensis), this protein is Cytidylate kinase.